We begin with the raw amino-acid sequence, 335 residues long: Cytoskeleton protein RodZ (335 aa).

Over 1-111 (MNTEATHDQN…LGKRRKKRDG (111 aa)) the chain is Cytoplasmic. Residues 19–71 (LRNAREQLGLSQQAVAERLCLKVSTVRDIEEDKAPADLASTFLRGYIRSYARL) form the HTH cro/C1-type domain. A DNA-binding region (H-T-H motif) is located at residues 30-49 (QQAVAERLCLKVSTVRDIEE). Residues 112-132 (WLMTFTWLVLFVVIGLSGAWW) form a helical; Signal-anchor for type II membrane protein membrane-spanning segment. Residues 133–335 (WQDHKAQQEE…TLNAEQSPAQ (203 aa)) are Periplasmic-facing. Positions 148-164 (DQSSAELNNNQSQSVPL) are enriched in polar residues. The disordered stretch occupies residues 148 to 244 (DQSSAELNNN…PLPTDQAGVT (97 aa)). Low complexity-rich tracts occupy residues 165–205 (DTST…DPQQ) and 217–239 (DTAA…LPTD).

It belongs to the RodZ family.

It localises to the cell inner membrane. Functionally, cytoskeletal protein that is involved in cell-shape control through regulation of the length of the long axis. The protein is Cytoskeleton protein RodZ of Escherichia coli O81 (strain ED1a).